The chain runs to 704 residues: Elongation factor G (704 aa).

Residues 8 to 291 (DKVRNIGIMA…AVVDYLASPL (284 aa)) form the tr-type G domain. GTP contacts are provided by residues 17-24 (AHIDAGKT), 90-94 (DTPGH), and 144-147 (NKMD).

It belongs to the TRAFAC class translation factor GTPase superfamily. Classic translation factor GTPase family. EF-G/EF-2 subfamily.

The protein localises to the cytoplasm. Its function is as follows. Catalyzes the GTP-dependent ribosomal translocation step during translation elongation. During this step, the ribosome changes from the pre-translocational (PRE) to the post-translocational (POST) state as the newly formed A-site-bound peptidyl-tRNA and P-site-bound deacylated tRNA move to the P and E sites, respectively. Catalyzes the coordinated movement of the two tRNA molecules, the mRNA and conformational changes in the ribosome. In Chlorobium phaeovibrioides (strain DSM 265 / 1930) (Prosthecochloris vibrioformis (strain DSM 265)), this protein is Elongation factor G.